The sequence spans 178 residues: Ribulose bisphosphate carboxylase small subunit, chloroplastic 4 (178 aa).

A chloroplast-targeting transit peptide spans 1 to 54; that stretch reads MASISSTVATVSRAAPAQANMVAPFTGLKSNAAFPATKKANDFSTLPSNGGRVQ.

This sequence belongs to the RuBisCO small chain family. In terms of assembly, heterohexadecamer of 8 large and 8 small subunits.

The protein resides in the plastid. It is found in the chloroplast. Functionally, ruBisCO catalyzes two reactions: the carboxylation of D-ribulose 1,5-bisphosphate, the primary event in carbon dioxide fixation, as well as the oxidative fragmentation of the pentose substrate. Both reactions occur simultaneously and in competition at the same active site. Although the small subunit is not catalytic it is essential for maximal activity. The polypeptide is Ribulose bisphosphate carboxylase small subunit, chloroplastic 4 (Flaveria pringlei).